The chain runs to 128 residues: Platelet basic protein (128 aa).

The first 34 residues, 1-34 (MSLRLDTTPSCNSARPLHALQVLLLLSLLLTALA), serve as a signal peptide directing secretion. Intrachain disulfides connect cysteine 63/cysteine 89 and cysteine 65/cysteine 105.

This sequence belongs to the intercrine alpha (chemokine CxC) family. As to quaternary structure, beta-thromboglobulin is a homotetramer. In terms of processing, proteolytic removal of residues 1-9 produces the active peptide connective tissue-activating peptide III (CTAP-III) (low-affinity platelet factor IV (LA-PF4)). Post-translationally, proteolytic removal of residues 1-13 produces the active peptide beta-thromboglobulin, which is released from platelets along with platelet factor 4 and platelet-derived growth factor. NAP-2(1-66) is produced by proteolytical processing, probably after secretion by leukocytes other than neutrophils. In terms of processing, NAP-2(73) and NAP-2(74) seem not be produced by proteolytical processing of secreted precursors but are released in an active form from platelets.

The protein localises to the secreted. LA-PF4 stimulates DNA synthesis, mitosis, glycolysis, intracellular cAMP accumulation, prostaglandin E2 secretion, and synthesis of hyaluronic acid and sulfated glycosaminoglycan. It also stimulates the formation and secretion of plasminogen activator by human synovial cells. NAP-2 is a ligand for CXCR1 and CXCR2, and NAP-2, NAP-2(73), NAP-2(74), NAP-2(1-66), and most potent NAP-2(1-63) are chemoattractants and activators for neutrophils. TC-1 and TC-2 are antibacterial proteins, in vitro released from activated platelet alpha-granules. CTAP-III(1-81) is more potent than CTAP-III desensitize chemokine-induced neutrophil activation. In Homo sapiens (Human), this protein is Platelet basic protein (PPBP).